Here is a 675-residue protein sequence, read N- to C-terminus: E3 ubiquitin-protein ligase COP1 (675 aa).

Residues 1–40 (MEEISTDPVVPAVKPDPRTSSVGEGANRHENDDGGSGGSE) form a disordered region. Zn(2+) is bound by residues Cys-52, Cys-55, Cys-67, His-69, Cys-72, Cys-75, Cys-86, and Cys-89. The RING-type zinc finger occupies 52 to 90 (CPICMQIIKDAFLTACGHSFCYMCIITHLRNKSDCPCCS). Residues 67 to 177 (CGHSFCYMCI…LDFLHCLRKQ (111 aa)) form a CLS (cytoplasmic localization signal) region. An SNLS (subnuclear localization signal) region spans residues 120–177 (ASPLDQFREALQRGCDVSIKEVDNLLTLLAERKRKMEQEEAERNMQILLDFLHCLRKQ). The stretch at 134–201 (CDVSIKEVDN…IKEDINAVER (68 aa)) forms a coiled coil. Positions 261 to 290 (EGKAQGSSHGLPKKDALSGSDSQSLNQSTV) are disordered. Positions 279–290 (GSDSQSLNQSTV) are enriched in polar residues. The Bipartite nuclear localization signal signature appears at 294 to 317 (RKKRIHAQFNDLQECYLQKRRQLA). WD repeat units lie at residues 369–408 (HSAN…NEPA), 418–458 (STRS…SLME), 461–501 (EHEK…SVIN), 503–543 (DMKA…QPLH), 547–585 (GHKK…PVRT), 588–627 (GHTN…PVTS), and 642–675 (AGSY…VLAA). The binding of human TRIB1 COP1-binding-motif stretch occupies residues 593–595 (KNF).

In terms of assembly, homodimer. Interacts with HY5, HYH, BBX24/STO, BBX25/STH, CIP8, COP10, SPA1, SPA2, SPA3, SPA4 and UVR8 and phosphorylated PHYA. Light induces dissociation of the SPA1/COP1 complex. Interacts with HRT/RPP8 and triggers it to the 26s proteasome. Binds to CRY2; this competitive interaction prevents triggering to proteasome of other binding proteins. Binds to SHW1 in the nucleus. Bonds to CIP7. Interacts with CSU2. Binds to CIP1. Interacts directly with DHU1. Associates to UNE10/PIF8. Binds directly to PCH1 and PCHL. In terms of processing, autoubiquitinated.

The protein resides in the nucleus. The protein localises to the cytoplasm. The catalysed reaction is S-ubiquitinyl-[E2 ubiquitin-conjugating enzyme]-L-cysteine + [acceptor protein]-L-lysine = [E2 ubiquitin-conjugating enzyme]-L-cysteine + N(6)-ubiquitinyl-[acceptor protein]-L-lysine.. It participates in protein modification; protein ubiquitination. Functionally, E3 ubiquitin-protein ligase that acts as a repressor of photomorphogenesis and as an activator of etiolation in darkness. E3 ubiquitin ligases accept ubiquitin from an E2 ubiquitin-conjugating enzyme in the form of a thioester and then directly transfers the ubiquitin to targeted substrates. Represses photomorphogenesis in darkness by mediating ubiquitination and subsequent proteasomal degradation of light-induced transcription factors such as HY5, HYH and LAF1. Down-regulates MYB21, probably via ubiquitination process. Light stimuli abrogate the repression of photomorphogenesis, possibly due to its localization to the cytoplasm. Could play a role in switching between skotomorphogenetic and photomorphogenetic pathways. Mediates the ubiquitination-dependent degradation of HY5 in the darkness during seedling development (e.g. hypocotyl growth). Represses CIP7 in darkness. Triggers ubiquitination and subsequent protein degradation of UNE10/PIF8, PCH1 and PCHL in the dark. This Arabidopsis thaliana (Mouse-ear cress) protein is E3 ubiquitin-protein ligase COP1.